The sequence spans 32 residues: Dermaseptin-L1 (32 aa).

As to expression, expressed by the skin glands.

The protein resides in the secreted. In terms of biological role, antimicrobial peptide active against the Gram-negative bacterium E.coli (MIC=8 uM) but inactive against the Gram-positive bacterium S.aureus. Also inhibits growth of zoospores of the chytrid fungus B.dendrobatidis at high concentrations (above 25 uM). Shows anticancer activities since it is cytolytic against HepG2 human hepatoma-derived cells (LC(50)=45 uM). Is only weakly hemolytic on human erythrocytes. The chain is Dermaseptin-L1 from Agalychnis lemur (Lemur leaf frog).